Here is a 326-residue protein sequence, read N- to C-terminus: Intracellular serine protease (326 aa).

The region spanning 23 to 303 (PRGVEMIQAP…NGLLYLTAVE (281 aa)) is the Peptidase S8 domain. Active-site charge relay system residues include Asp-49, His-86, and Ser-244.

The protein belongs to the peptidase S8 family.

Its function is as follows. Involved in the generation of beta- and alpha-amylases from the large amylase precursor. The chain is Intracellular serine protease (isp) from Paenibacillus polymyxa (Bacillus polymyxa).